Consider the following 188-residue polypeptide: dCTP deaminase (188 aa).

DCTP contacts are provided by residues 111-116 (KSTYAR), 135-137 (TLE), Gln156, Tyr170, and Gln180. The active-site Proton donor/acceptor is Glu137.

This sequence belongs to the dCTP deaminase family. Homotrimer.

The enzyme catalyses dCTP + H2O + H(+) = dUTP + NH4(+). It functions in the pathway pyrimidine metabolism; dUMP biosynthesis; dUMP from dCTP (dUTP route): step 1/2. Catalyzes the deamination of dCTP to dUTP. In Ectopseudomonas mendocina (strain ymp) (Pseudomonas mendocina), this protein is dCTP deaminase.